We begin with the raw amino-acid sequence, 394 residues long: E3 ubiquitin-protein ligase RNF149 (394 aa).

A signal peptide spans 1-31 (MAARRRPAAGVGARDALAVLALALCTPGVGG). Residues Asn51 and Asn141 are each glycosylated (N-linked (GlcNAc...) asparagine). In terms of domain architecture, PA spans 66-171 (SSLREERQGL…PKGREIFDLV (106 aa)). Residues 197–217 (VVFVAIAFITMMIISLAWLIF) traverse the membrane as a helical segment. The RING-type; atypical zinc-finger motif lies at 265–306 (CAVCIENFKVKDVIRILPCKHIFHRICIDPWLLDHRTCPMCK). The segment at 321 to 394 (DTQELPTPEA…SEPQHGGSIC (74 aa)) is disordered. Thr327 is subject to Phosphothreonine. An N-linked (GlcNAc...) asparagine glycan is attached at Asn339. 2 positions are modified to phosphoserine: Ser341 and Ser344. Residues 352-362 (SNLPSSSSSES) show a composition bias toward low complexity.

It is found in the membrane. It carries out the reaction S-ubiquitinyl-[E2 ubiquitin-conjugating enzyme]-L-cysteine + [acceptor protein]-L-lysine = [E2 ubiquitin-conjugating enzyme]-L-cysteine + N(6)-ubiquitinyl-[acceptor protein]-L-lysine.. The protein operates within protein modification; protein ubiquitination. Its function is as follows. E3 ubiquitin-protein ligase. Ubiquitinates BRAF, inducing its proteasomal degradation. In Mus musculus (Mouse), this protein is E3 ubiquitin-protein ligase RNF149 (Rnf149).